Consider the following 323-residue polypeptide: Aldo-keto reductase family 1 member C18 (323 aa).

NADP(+)-binding positions include 20–24 and D50; that span reads GFGTY. Catalysis depends on Y55, which acts as the Proton donor. Position 117 (H117) interacts with substrate. Residues 166 to 167, Q190, 216 to 221, and 270 to 280 contribute to the NADP(+) site; these read SN, YGALGT, and KSFNEERIREN.

Belongs to the aldo/keto reductase family. As to quaternary structure, monomer. In terms of processing, the N-terminus is blocked. In terms of tissue distribution, corpus luteum (large luteal cells).

The protein localises to the cytoplasm. It catalyses the reaction (17R,20S)-17,20-dihydroxypregn-4-en-3-one + NADP(+) = 17alpha-hydroxyprogesterone + NADPH + H(+). The enzyme catalyses (17R,20S)-17,20-dihydroxypregn-4-en-3-one + NAD(+) = 17alpha-hydroxyprogesterone + NADH + H(+). Its function is as follows. Catalyzes the conversion of progesterone into 20-alpha-dihydroprogesterone (20 alpha-OHP). The chain is Aldo-keto reductase family 1 member C18 (Akr1c18) from Rattus norvegicus (Rat).